The chain runs to 456 residues: Palmitoyltransferase PFA4 (456 aa).

Residues 1 to 9 (MAARNWSRV) lie on the Cytoplasmic side of the membrane. Residues 10–30 (WVGGTVILISFIAFSSQIFVI) traverse the membrane as a helical segment. Over 31 to 37 (WPWYGRE) the chain is Lumenal. Residues 38-58 (ISLDLLMLLVPLNLAAFMIFW) form a helical membrane-spanning segment. Residues 59–138 (NYRLCVITSP…GNCVGFYNQG (80 aa)) are Cytoplasmic-facing. Residues 95 to 145 (RYCKNCAHYKPPRAHHCRQCKTCWLKLDHHCPWIGNCVGFYNQGHFIRFLL) form the DHHC domain. C125 functions as the S-palmitoyl cysteine intermediate in the catalytic mechanism. Residues 139 to 159 (HFIRFLLWVDIGTTFHLIIMV) form a helical membrane-spanning segment. The Lumenal segment spans residues 160-176 (RRVLYIAEYYHEPTLAD). A helical membrane pass occupies residues 177–197 (VLFLVFNFATCVPVWLCVGMF). The Cytoplasmic segment spans residues 198–456 (SIYHVYLACG…DPEEESGYTH (259 aa)). Positions 284–377 (PPQDPSRLPN…YDHYDEGPMY (94 aa)) are disordered. The segment covering 285–298 (PQDPSRLPNPPPIP) has biased composition (pro residues). Residues 309–321 (NGFNPNLRPTNSL) are compositionally biased toward polar residues. Residues 337-352 (SHEQGRHYSSGDERDN) show a composition bias toward basic and acidic residues.

The protein belongs to the DHHC palmitoyltransferase family. PFA4 subfamily.

It localises to the endoplasmic reticulum membrane. The catalysed reaction is L-cysteinyl-[protein] + hexadecanoyl-CoA = S-hexadecanoyl-L-cysteinyl-[protein] + CoA. In terms of biological role, mediates the reversible addition of palmitate to target proteins, thereby regulating their membrane association and biological function. Responsible for the modification of a subset of proteins that are critical in cryptococcal pathogenesis, with substrates involved in cell wall synthesis, signal transduction, and membrane trafficking. Palmitoylates chitin synthase CHS3. The polypeptide is Palmitoyltransferase PFA4 (Cryptococcus neoformans var. grubii serotype A (strain H99 / ATCC 208821 / CBS 10515 / FGSC 9487) (Filobasidiella neoformans var. grubii)).